Here is a 548-residue protein sequence, read N- to C-terminus: T-complex protein 1 subunit theta (548 aa).

Position 2 is an N-acetylalanine (Ala2). At Ser23 the chain carries Phosphoserine. At Tyr30 the chain carries Phosphotyrosine. ADP contacts are provided by Tyr47 and Gly48. Position 99 (Asp99) interacts with Mg(2+). ADP-binding residues include Gly100, Thr101, Asn102, and Phe103. ATP contacts are provided by Gly100, Thr101, and Asn102. The residue at position 162 (Ser162) is a Phosphoserine. ADP-binding residues include Met169, Ser170, and Lys171. Positions 170 and 171 each coordinate ATP. At Ser213 the chain carries Phosphoserine. Residues Lys224, Lys254, and Lys260 each participate in a glycyl lysine isopeptide (Lys-Gly) (interchain with G-Cter in SUMO2) cross-link. Residues Ser269 and Ser317 each carry the phosphoserine modification. An N6-acetyllysine mark is found at Lys318 and Lys400. Gly412 lines the ADP pocket. Gly412 contacts ATP. Residue Lys459 forms a Glycyl lysine isopeptide (Lys-Gly) (interchain with G-Cter in SUMO1) linkage. Lys466 carries the post-translational modification N6-acetyllysine. Asp499 lines the ADP pocket. ATP is bound by residues Asp499 and Lys504. Tyr505 bears the Phosphotyrosine mark. Residues 529–548 form a disordered region; sequence PAGGPKPPSGKKDWDDDQND. Lys534 is covalently cross-linked (Glycyl lysine isopeptide (Lys-Gly) (interchain with G-Cter in SUMO2)). Position 537 is a phosphoserine (Ser537). Lys539 is covalently cross-linked (Glycyl lysine isopeptide (Lys-Gly) (interchain with G-Cter in SUMO2)).

The protein belongs to the TCP-1 chaperonin family. Component of the chaperonin-containing T-complex (TRiC), a hexadecamer composed of two identical back-to-back stacked rings enclosing a protein folding chamber. Each ring is made up of eight different subunits: TCP1/CCT1, CCT2, CCT3, CCT4, CCT5, CCT6A/CCT6, CCT7, CCT8. Interacts with PACRG. Interacts with DNAAF4. Interacts with synaptic plasticity regulator PANTS.

It localises to the cytoplasm. It is found in the cytoskeleton. The protein localises to the microtubule organizing center. The protein resides in the centrosome. Its subcellular location is the cilium basal body. The enzyme catalyses ATP + H2O = ADP + phosphate + H(+). Its function is as follows. Component of the chaperonin-containing T-complex (TRiC), a molecular chaperone complex that assists the folding of actin, tubulin and other proteins upon ATP hydrolysis. The TRiC complex mediates the folding of WRAP53/TCAB1, thereby regulating telomere maintenance. As part of the TRiC complex may play a role in the assembly of BBSome, a complex involved in ciliogenesis regulating transports vesicles to the cilia. The chain is T-complex protein 1 subunit theta (CCT8) from Macaca fascicularis (Crab-eating macaque).